The following is a 162-amino-acid chain: Interleukin-15 (162 aa).

Residues 1 to 29 (MRISKPHLRITSIQCYVCLLLNTHFLTEA) form the signal peptide. Residues 30-48 (GIRVFILGCISAGIPKTEA) constitute a propeptide that is removed on maturation. 2 cysteine pairs are disulfide-bonded: Cys83-Cys133 and Cys90-Cys136. Asn119, Asn127, and Asn143 each carry an N-linked (GlcNAc...) asparagine glycan.

The protein belongs to the IL-15/IL-21 family.

The protein localises to the secreted. Cytokine that plays a major role in the development of inflammatory and protective immune responses to microbial invaders and parasites by modulating immune cells of both the innate and adaptive immune systems. Stimulates the proliferation of natural killer cells, T-cells and B-cells and promotes the secretion of several cytokines. In monocytes, induces the production of IL8 and monocyte chemotactic protein 1/CCL2, two chemokines that attract neutrophils and monocytes respectively to sites of infection. Unlike most cytokines, which are secreted in soluble form, IL15 is expressed in association with its high affinity IL15RA on the surface of IL15-producing cells and delivers signals to target cells that express IL2RB and IL2RG receptor subunits. Binding to its receptor triggers the phosphorylation of JAK1 and JAK3 and the recruitment and subsequent phosphorylation of signal transducer and activator of transcription-3/STAT3 and STAT5. In mast cells, induces the rapid tyrosine phosphorylation of STAT6 and thereby controls mast cell survival and release of cytokines such as IL4. The polypeptide is Interleukin-15 (IL15) (Marmota himalayana (Himalayan marmot)).